Reading from the N-terminus, the 814-residue chain is Origin of replication complex subunit 1 (814 aa).

Residues 1–15 are compositionally biased toward polar residues; the sequence is MDLSATPSRSKSGLR. Residues 1-127 are disordered; the sequence is MDLSATPSRS…PKKPKKRAYY (127 aa). Low complexity-rich tracts occupy residues 51–62 and 69–80; these read APMSPVTPSSVR and ETPTKVTSETPV. The Nuclear localization signal signature appears at 105-112; the sequence is PKRQRQRQ. The segment covering 108 to 127 has biased composition (basic residues); sequence QRQRQRQRQQPKKPKKRAYY. The histone H3 binding stretch occupies residues 157-181; sequence DPEAEECRVCFRAGAAVMVECDVCL. The segment at 160-209 adopts a PHD-type zinc-finger fold; it reads AEECRVCFRAGAAVMVECDVCLGGFHLRCVRPPLRRVPEGDWACPYCEAE. Positions 163, 166, 177, 180, 185, and 188 each coordinate Zn(2+). A histone H3 binding region spans residues 197-201; that stretch reads PEGDW. The Zn(2+) site is built by Cys-203 and Cys-206. One can recognise a BAH domain in the interval 218–335; sequence PKPPEGKRIV…IHWHNFKRLA (118 aa). The tract at residues 310-315 is histone H3 binding; the sequence is ASDQGD. Composition is skewed to acidic residues over residues 339–349 and 360–373; these read DEPETKEDPGD and SDSD…EEEE. The segment at 339–384 is disordered; the sequence is DEPETKEDPGDEPYNAGNDYVSDSDEDSEYDEEEEPTKCSSARTHQ. The interval 433–804 is necessary and sufficient for ORC complex assembly; sequence PKSLPCRDKE…DDVTFALKES (372 aa). ATP contacts are provided by residues 468–475 and 468–476; these read GVPGTGKT and GVPGTGKTM. Residues Asp-558 and Glu-559 each contribute to the Mg(2+) site. Residues Glu-559, Asn-592, and Arg-657 each contribute to the ATP site.

Belongs to the ORC1 family. As to quaternary structure, component of the origin recognition complex (ORC) composed of at least ORC1, ORC2, ORC3, ORC4, ORC5 and ORC6. ORC is regulated in a cell-cycle and development dependent manner. It is sequentially assembled at the exit from anaphase of mitosis and disassembled as cells enter S phase. Binds unmodified and methylated histone H3. As to expression, expressed strongly in root tips and shoot apical meristem (SAM), and weakly in young leaves. Not detected in mature leaves.

The protein localises to the nucleus. Essential protein. Component of the origin recognition complex (ORC) that binds origins of replication. It has a role in both chromosomal replication and mating type transcriptional silencing. Binds to the ARS consensus sequence (ACS) of origins of replication. H3K4me3 effector that positively regulates the transcription of a subset of genes. Required for cell proliferation. The sequence is that of Origin of replication complex subunit 1 from Oryza sativa subsp. japonica (Rice).